Consider the following 108-residue polypeptide: UPF0060 membrane protein DSY4629 (108 aa).

4 helical membrane passes run 5–25 (IILF…VWLW), 31–51 (PFWY…IPTL), 60–80 (VYAA…WGID), and 86–106 (NYDW…LWAP).

It belongs to the UPF0060 family.

It localises to the cell membrane. This chain is UPF0060 membrane protein DSY4629, found in Desulfitobacterium hafniense (strain Y51).